The sequence spans 1104 residues: MLPLRAFARLAQRPRLSRPTQLARSSLPRPSPSRPAAHYLALAPAPSTRFLHSSPPVLKEKRWLNNTPPEDDGEDGQNPKQDDQVEKPLPDAESSKSAEERAKSQSSKPDIKASSSDSVSSSAPAPGSADGGSPPGAGGPKEVAKPVIPEIYPQVLAIPITHRPLFPGFYKAVTVRSPPVIKAIRELQAHGQPYVGAFLLKDSTVDSDVVTDINQVQPVGVFCQITSCFTSQEGEGKPEALTAVLFPHRRIKINELVKSSGTKGDGTVGVGGLVEGSQDSAKGEGEVKSFESEVPGVEEVREELGTVSIDSEQPDVHKENRDLETKEVTQIDFLHSLLPQVSLTNVSNLSIEPYEKDSQVIRAIMSELISVFKEIAQLQPMFREQVTSFAISNTSSQVFDEPDKLADLAAVVSTADVSDLQAVLSSTSIEDRLQRALVLLKKELINAQLQFKISRDVDTKIQKRQREYYLMEQLKGIKKELGMESDGKDKLVEGFKEKASKLAMPEGVRKVFDEELNKLVHLEPAASEFNVTRNYIDWLTQVPWGVHTPENYNISHAIKILDEDHYGLKDVKDRILEFMAIGKLRGSVEGKILCLVGPPGVGKTSIGKSIAKALGRQFFRFSVGGLTDVAEIKGHRRTYIGAMPGKPIQALKKVATENPLILIDEVDKISKAYNGDPASALLEMLDPEQNKSFLDHYLDVPIDLSKVLFVCTANVLETIPGPLLDRMEVLEVSGYVSAEKMNIAERYLSPQAKVAAGLEDVNIELEPGAIEALIRYYCRESGVRNLKKHIDKIYRKAAFKIVTDLGESGLPEPATPPAENQVEAQYPDIKPASELTYNVIPGTEVSGVDTKTDVTTVPREPMKVPAGIHVKVTQENLKDYVGPPLYHKDRLYTHSPPAGVSTGLGYLGNGSGAVMPVEINSMPGKGNLQLTGKLGEVIRESAQIAMSWVKSNAYLLGITKSEAEATLNDRDVHLHMPEGGIGKEGPSAGTAILTAFVSLFTKTRVDPDIAMTGEISLLGQVLPVGGLKEKILAAHRAGIKKLIVPAGCKPDIDENVPESVKGGIEFVFVEDVRQVLHEAFRGTEVEKRWQETLPMEEEPQRERH.

The transit peptide at 1–58 directs the protein to the mitochondrion; sequence MLPLRAFARLAQRPRLSRPTQLARSSLPRPSPSRPAAHYLALAPAPSTRFLHSSPPVL. Disordered stretches follow at residues 8-144 and 275-295; these read ARLA…KEVA and EGSQDSAKGEGEVKSFESEVP. Residues 22–46 are compositionally biased toward low complexity; that stretch reads LARSSLPRPSPSRPAAHYLALAPAP. Over residues 80 to 103 the composition is skewed to basic and acidic residues; it reads KQDDQVEKPLPDAESSKSAEERAK. Residues 104–128 are compositionally biased toward low complexity; that stretch reads SQSSKPDIKASSSDSVSSSAPAPGS. The span at 129–139 shows a compositional bias: gly residues; sequence ADGGSPPGAGG. The region spanning 155–444 is the Lon N-terminal domain; sequence VLAIPITHRP…RALVLLKKEL (290 aa). A compositionally biased stretch (basic and acidic residues) spans 281–291; the sequence is AKGEGEVKSFE. 597–604 is an ATP binding site; the sequence is GPPGVGKT. The 188-residue stretch at 895–1082 folds into the Lon proteolytic domain; sequence SPPAGVSTGL…RQVLHEAFRG (188 aa). Active-site residues include serine 987 and lysine 1030.

The protein belongs to the peptidase S16 family. As to quaternary structure, homohexamer or homoheptamer. Organized in a ring with a central cavity.

It is found in the mitochondrion matrix. The catalysed reaction is Hydrolysis of proteins in presence of ATP.. ATP-dependent serine protease that mediates the selective degradation of misfolded, unassembled or oxidatively damaged polypeptides as well as certain short-lived regulatory proteins in the mitochondrial matrix. May also have a chaperone function in the assembly of inner membrane protein complexes. Participates in the regulation of mitochondrial gene expression and in the maintenance of the integrity of the mitochondrial genome. Binds to mitochondrial DNA in a site-specific manner. This chain is Lon protease homolog, mitochondrial, found in Cryptococcus neoformans var. neoformans serotype D (strain JEC21 / ATCC MYA-565) (Filobasidiella neoformans).